Reading from the N-terminus, the 122-residue chain is Prefoldin subunit 1 (122 aa).

Alanine 2 is subject to N-acetylalanine.

The protein belongs to the prefoldin subunit beta family. In terms of assembly, heterohexamer of two PFD-alpha type and four PFD-beta type subunits.

Functionally, binds specifically to cytosolic chaperonin (c-CPN) and transfers target proteins to it. Binds to nascent polypeptide chain and promotes folding in an environment in which there are many competing pathways for nonnative proteins. This is Prefoldin subunit 1 (Pfdn1) from Mus musculus (Mouse).